Reading from the N-terminus, the 281-residue chain is Phosphatidylserine decarboxylase proenzyme (281 aa).

Catalysis depends on charge relay system; for autoendoproteolytic cleavage activity residues aspartate 90, histidine 143, and serine 248. Serine 248 serves as the catalytic Schiff-base intermediate with substrate; via pyruvic acid; for decarboxylase activity. Residue serine 248 is modified to Pyruvic acid (Ser); by autocatalysis.

Belongs to the phosphatidylserine decarboxylase family. PSD-B subfamily. Prokaryotic type I sub-subfamily. Heterodimer of a large membrane-associated beta subunit and a small pyruvoyl-containing alpha subunit. The cofactor is pyruvate. Post-translationally, is synthesized initially as an inactive proenzyme. Formation of the active enzyme involves a self-maturation process in which the active site pyruvoyl group is generated from an internal serine residue via an autocatalytic post-translational modification. Two non-identical subunits are generated from the proenzyme in this reaction, and the pyruvate is formed at the N-terminus of the alpha chain, which is derived from the carboxyl end of the proenzyme. The autoendoproteolytic cleavage occurs by a canonical serine protease mechanism, in which the side chain hydroxyl group of the serine supplies its oxygen atom to form the C-terminus of the beta chain, while the remainder of the serine residue undergoes an oxidative deamination to produce ammonia and the pyruvoyl prosthetic group on the alpha chain. During this reaction, the Ser that is part of the protease active site of the proenzyme becomes the pyruvoyl prosthetic group, which constitutes an essential element of the active site of the mature decarboxylase.

It is found in the cell membrane. The catalysed reaction is a 1,2-diacyl-sn-glycero-3-phospho-L-serine + H(+) = a 1,2-diacyl-sn-glycero-3-phosphoethanolamine + CO2. It participates in phospholipid metabolism; phosphatidylethanolamine biosynthesis; phosphatidylethanolamine from CDP-diacylglycerol: step 2/2. In terms of biological role, catalyzes the formation of phosphatidylethanolamine (PtdEtn) from phosphatidylserine (PtdSer). The chain is Phosphatidylserine decarboxylase proenzyme from Francisella philomiragia subsp. philomiragia (strain ATCC 25017 / CCUG 19701 / FSC 153 / O#319-036).